The chain runs to 353 residues: Photosystem II protein D1 (353 aa).

At threonine 2 the chain carries N-acetylthreonine. Position 2 is a phosphothreonine (threonine 2). 3 consecutive transmembrane segments (helical) span residues 29-46 (YIGWFGVLMIPTLLTATS), 118-133 (HFLLGVACYMGREWEL), and 142-156 (WIAVAYSAPVAAATA). Residue histidine 118 participates in chlorophyll a binding. Pheophytin a is bound at residue tyrosine 126. [CaMn4O5] cluster is bound by residues aspartate 170 and glutamate 189. A helical transmembrane segment spans residues 197 to 218 (FHMLGVAGVFGGSLFSAMHGSL). A chlorophyll a-binding site is contributed by histidine 198. A quinone is bound by residues histidine 215 and 264-265 (SF). Histidine 215 serves as a coordination point for Fe cation. Histidine 272 contributes to the Fe cation binding site. Residues 274–288 (FLAAWPVVGIWFTAL) form a helical membrane-spanning segment. Histidine 332, glutamate 333, aspartate 342, and alanine 344 together coordinate [CaMn4O5] cluster. Residues 345 to 353 (AVEAPSTNG) constitute a propeptide that is removed on maturation.

The protein belongs to the reaction center PufL/M/PsbA/D family. In terms of assembly, PSII is composed of 1 copy each of membrane proteins PsbA, PsbB, PsbC, PsbD, PsbE, PsbF, PsbH, PsbI, PsbJ, PsbK, PsbL, PsbM, PsbT, PsbX, PsbY, PsbZ, Psb30/Ycf12, at least 3 peripheral proteins of the oxygen-evolving complex and a large number of cofactors. It forms dimeric complexes. The cofactor is The D1/D2 heterodimer binds P680, chlorophylls that are the primary electron donor of PSII, and subsequent electron acceptors. It shares a non-heme iron and each subunit binds pheophytin, quinone, additional chlorophylls, carotenoids and lipids. D1 provides most of the ligands for the Mn4-Ca-O5 cluster of the oxygen-evolving complex (OEC). There is also a Cl(-1) ion associated with D1 and D2, which is required for oxygen evolution. The PSII complex binds additional chlorophylls, carotenoids and specific lipids.. Tyr-161 forms a radical intermediate that is referred to as redox-active TyrZ, YZ or Y-Z. Post-translationally, C-terminally processed by CTPA; processing is essential to allow assembly of the oxygen-evolving complex and thus photosynthetic growth.

The protein localises to the plastid. It localises to the chloroplast thylakoid membrane. The catalysed reaction is 2 a plastoquinone + 4 hnu + 2 H2O = 2 a plastoquinol + O2. Its function is as follows. Photosystem II (PSII) is a light-driven water:plastoquinone oxidoreductase that uses light energy to abstract electrons from H(2)O, generating O(2) and a proton gradient subsequently used for ATP formation. It consists of a core antenna complex that captures photons, and an electron transfer chain that converts photonic excitation into a charge separation. The D1/D2 (PsbA/PsbD) reaction center heterodimer binds P680, the primary electron donor of PSII as well as several subsequent electron acceptors. The protein is Photosystem II protein D1 of Lepidium virginicum (Virginia pepperweed).